A 309-amino-acid chain; its full sequence is Mitochondrial import receptor subunit TOM34 (309 aa).

Ser-8 carries the phosphoserine modification. 3 TPR repeats span residues 9–42, 51–84, and 86–118; these read VEELRAAGNESFRNGQYAEASALYGRALRVLQAQ, SVLYSNRAACHLKDGNCRDCIKDCTSALALVPFS, and KPLLRRASAYEALEKYPMAYVDYKTVLQIDDNV. Ser-160 is subject to Phosphoserine. Residues 161–189 are disordered; the sequence is LPSENHKEMAKSKSKETTATKNRVPSAGD. Residues 164 to 178 show a composition bias toward basic and acidic residues; the sequence is ENHKEMAKSKSKETT. Residue Ser-186 is modified to Phosphoserine. 3 TPR repeats span residues 193–226, 227–260, and 262–294; these read ARVLKEEGNELVKKGNHKKAIEKYSESLLCSNLE, SATYSNRALCYLVLKQYTEAVKDCTEALKLDGKN, and KAFYRRAQAHKALKDYKSSFADISNLLQIEPRN. Lys-197 is covalently cross-linked (Glycyl lysine isopeptide (Lys-Gly) (interchain with G-Cter in SUMO2)).

This sequence belongs to the Tom34 family. In terms of assembly, interacts with HSP90A, VCP, ATP6V1D, KIAA0665, AMPK, and DMAP1 through its TPR repeat. As to expression, ubiquitous.

The protein localises to the cytoplasm. The protein resides in the mitochondrion outer membrane. Functionally, plays a role in the import of cytosolically synthesized preproteins into mitochondria. Binds the mature portion of precursor proteins. Interacts with cellular components, and possesses weak ATPase activity. May be a chaperone-like protein that helps to keep newly synthesized precursors in an unfolded import compatible state. In Homo sapiens (Human), this protein is Mitochondrial import receptor subunit TOM34 (TOMM34).